A 614-amino-acid polypeptide reads, in one-letter code: MDQSKMRYTNQFRKTPQKPTSTEVGNHHTPAHSPMAQHETSMWNFNSLNPYFSMLNMNDGMNYARHQQNHIVTSRPPTPLTDLMSLRSFQSFPNVFMPVSRSRTSSFIQSDTDSSRLEPDDFSQNVRYCSTEIDRNNSSSKNDHLKYSRPALSRNSRSFTRSNNVLPTWSLDSNGEMRSRLSLSEVLDSGDLMKFAVDKTGCQFLEKAVKGSLTSYQKFQLFEQVIGRKDDFLKLSTNIFGNYFVQEIIGMSLTTYDDDNIKRQEKLKNFISSQMTDMCLDKFACRVIQSSLQNMDLSLACKLVQALPRDARLIAICVDQNANHVIQKVVAVIPLKNWEFIVDFVATPEHLRQICFDKYGCRVVQTIIEKLTADSINVDLTSAAQHLRERALQRLMTSVTNRCQELATNEYANYIIQHIVSNDDLAVYRECIIEKCLMRNLLSLSQEKFASHVVEKAFLHAPMELLAEMMDEIFDGYMPHPGTGKDALDIMMFHQFGNYVVQCMLTICCDAVSGRRQTKEGSYDHANSFQVWLKKLHSRVTKERHRLSRFSSGKKMIETLAHLRSTHPIYGLQSSGHESFKTDCFSTASEHDGLELEKNGIEEGNLRLMRTFSP.

Over residues 1 to 24 (MDQSKMRYTNQFRKTPQKPTSTEV) the composition is skewed to polar residues. A disordered region spans residues 1 to 34 (MDQSKMRYTNQFRKTPQKPTSTEVGNHHTPAHSP). Residues 160–564 (TRSNNVLPTW…KMIETLAHLR (405 aa)) enclose the PUM-HD domain. 8 Pumilio repeats span residues 185 to 223 (EVLD…QLFE), 224 to 263 (QVIG…NIKR), 269 to 305 (NFIS…KLVQ), 306 to 342 (ALPR…EFIV), 343 to 382 (DFVA…DLTS), 398 to 434 (SVTN…CIIE), 436 to 471 (CLMR…EMMD), and 483 to 519 (TGKD…RQTK). The binding to gld-3 isoform A stretch occupies residues 283–614 (FACRVIQSSL…NLRLMRTFSP (332 aa)).

As to quaternary structure, interacts (via C-terminus) with gld-3 isoform A in an RNA-independent manner. Expressed specifically in the germline (at protein level).

The protein localises to the cytoplasm. Functionally, RNA-binding protein that binds to the consensus sequence 5'-UGUGCCAUA-3' in mRNA 3'-UTRs. Involved in the control of stem cells and sex determination in the C.elegans hermaphrodite germline. May also play a role in the hermaphrodite germline proliferation and oogenesis. Binds specifically to the regulatory region of fem-3 3'-UTR and mediates the sperm/oocyte switch. Negatively regulates gld-3 expression, possibly by directly binding to two sites within the 3'-UTR of gld-3 isoform b. In association with the cye-1/cdk-2 complex, negatively regulates gld-1 expression in the distal germline cells of the mitotic zone. By binding to the 3'-UTR, represses phosphatase lip-1 expression in the distal part of the germline mitotic zone. Suppresses germline tumor formation by preventing the dedifferentiation of secondary spermatocytes. The chain is Fem-3 mRNA-binding factor 1 (fbf-1) from Caenorhabditis elegans.